A 425-amino-acid chain; its full sequence is Serine--tRNA ligase (425 aa).

233–235 (TAE) contributes to the L-serine binding site. 264 to 266 (RAE) lines the ATP pocket. E287 is a binding site for L-serine. Position 351 to 354 (351 to 354 (EISS)) interacts with ATP. Residue S387 coordinates L-serine.

This sequence belongs to the class-II aminoacyl-tRNA synthetase family. Type-1 seryl-tRNA synthetase subfamily. In terms of assembly, homodimer. The tRNA molecule binds across the dimer.

The protein resides in the cytoplasm. The catalysed reaction is tRNA(Ser) + L-serine + ATP = L-seryl-tRNA(Ser) + AMP + diphosphate + H(+). The enzyme catalyses tRNA(Sec) + L-serine + ATP = L-seryl-tRNA(Sec) + AMP + diphosphate + H(+). The protein operates within aminoacyl-tRNA biosynthesis; selenocysteinyl-tRNA(Sec) biosynthesis; L-seryl-tRNA(Sec) from L-serine and tRNA(Sec): step 1/1. Functionally, catalyzes the attachment of serine to tRNA(Ser). Is also able to aminoacylate tRNA(Sec) with serine, to form the misacylated tRNA L-seryl-tRNA(Sec), which will be further converted into selenocysteinyl-tRNA(Sec). The protein is Serine--tRNA ligase of Clostridium botulinum (strain Eklund 17B / Type B).